Consider the following 141-residue polypeptide: FRGRAPRPLVGRSCQAAQHPHTRPKRQVRDCGREGDLRAGKAADRRLPRARETCSRFGEGVRQKDVHKGPVEGTVLNPAGPPGDQAQRADVPDPGRSRRATVPIAQERRLEHRPILVYPESDNMYNLIREAWLSLERGTHR.

The disordered stretch occupies residues phenylalanine 1–threonine 101. Positions glutamine 27 to proline 70 are enriched in basic and acidic residues.

This is an uncharacterized protein from Dhori virus (strain Indian/1313/61) (Dho).